The chain runs to 1932 residues: DOCK-like protein 1 (1932 aa).

The region spanning 1410–1824 (LLEANRPELF…EIERYSRTLS (415 aa)) is the DOCKER domain. Residues 1908 to 1921 (STFLAGSQPNTNTD) show a composition bias toward polar residues. Residues 1908 to 1932 (STFLAGSQPNTNTDSQHKHDYSHSG) form a disordered region. The segment covering 1922-1932 (SQHKHDYSHSG) has biased composition (basic and acidic residues).

It belongs to the DOCK family. In terms of assembly, forms an active heterodimer with LMO1.

It localises to the cytoplasm. Its subcellular location is the mitochondrion. Functionally, forms a transiant heterodimeric complex with LMO1, that acts as a guanine nucleotide exchange factor exchange factor (GEF) for the small GTPase RHO5. DCK1, LMO1 and RHO5 relocate to mitochondria upon oxidative stress and trigger cell death. The DCK1/LMO1/RHO5 signaling module mediates mitochondrial turnover under nitrogen starvation conditions via mitophagy. The DCK1/LMO1/RHO5 signaling module plays also a function in cell wall integrity signaling. This chain is DOCK-like protein 1, found in Saccharomyces cerevisiae (strain ATCC 204508 / S288c) (Baker's yeast).